A 299-amino-acid polypeptide reads, in one-letter code: Oxygen-dependent coproporphyrinogen-III oxidase (299 aa).

Residue Ser92 participates in substrate binding. 2 residues coordinate Mn(2+): His96 and His106. His106 (proton donor) is an active-site residue. 108 to 110 contributes to the substrate binding site; it reads NVR. Positions 145 and 175 each coordinate Mn(2+). The segment at 240-275 is important for dimerization; sequence YVEFNLVWDRGTLFGLQTGGRTESILMSMPPLVRWE. Residue 258 to 260 coordinates substrate; the sequence is GGR.

The protein belongs to the aerobic coproporphyrinogen-III oxidase family. As to quaternary structure, homodimer. Mn(2+) serves as cofactor.

Its subcellular location is the cytoplasm. The enzyme catalyses coproporphyrinogen III + O2 + 2 H(+) = protoporphyrinogen IX + 2 CO2 + 2 H2O. The protein operates within porphyrin-containing compound metabolism; protoporphyrin-IX biosynthesis; protoporphyrinogen-IX from coproporphyrinogen-III (O2 route): step 1/1. In terms of biological role, involved in the heme biosynthesis. Catalyzes the aerobic oxidative decarboxylation of propionate groups of rings A and B of coproporphyrinogen-III to yield the vinyl groups in protoporphyrinogen-IX. This chain is Oxygen-dependent coproporphyrinogen-III oxidase, found in Escherichia coli O17:K52:H18 (strain UMN026 / ExPEC).